The following is a 115-amino-acid chain: UPF0122 protein NT01CX_2214 (115 aa).

This sequence belongs to the UPF0122 family.

In terms of biological role, might take part in the signal recognition particle (SRP) pathway. This is inferred from the conservation of its genetic proximity to ftsY/ffh. May be a regulatory protein. The protein is UPF0122 protein NT01CX_2214 of Clostridium novyi (strain NT).